The chain runs to 161 residues: Peptidyl-prolyl cis-trans isomerase-like 3 (161 aa).

Residues 1-153 enclose the PPIase cyclophilin-type domain; sequence MSVTLHTSLG…NEIILKSVTI (153 aa).

The protein belongs to the cyclophilin-type PPIase family. PPIL3 subfamily.

The catalysed reaction is [protein]-peptidylproline (omega=180) = [protein]-peptidylproline (omega=0). Functionally, PPIases accelerate the folding of proteins. It catalyzes the cis-trans isomerization of proline imidic peptide bonds in oligopeptides. The chain is Peptidyl-prolyl cis-trans isomerase-like 3 (ppil3) from Dictyostelium discoideum (Social amoeba).